The sequence spans 158 residues: Endoribonuclease YbeY (158 aa).

Zn(2+)-binding residues include histidine 119, histidine 123, and aspartate 129.

Belongs to the endoribonuclease YbeY family. It depends on Zn(2+) as a cofactor.

It localises to the cytoplasm. Its function is as follows. Single strand-specific metallo-endoribonuclease involved in late-stage 70S ribosome quality control and in maturation of the 3' terminus of the 16S rRNA. The protein is Endoribonuclease YbeY of Chlamydia caviae (strain ATCC VR-813 / DSM 19441 / 03DC25 / GPIC) (Chlamydophila caviae).